Reading from the N-terminus, the 370-residue chain is Zinc finger protein 830 (370 aa).

2 disordered regions span residues 1–21 (MASSTSARTPAGKRVVNQEEL) and 75–220 (HRER…LVPH). An N-acetylalanine modification is found at Ala-2. The stretch at 16–40 (VNQEELRRLMKEKQRLSTNRKRIES) forms a coiled coil. The segment at 53–75 (CALCNTPVKSELLWQTHVLGKQH) adopts a C2H2-type zinc-finger fold. Residues 90–99 (QGPSAGTAPQ) are compositionally biased toward polar residues. A compositionally biased stretch (basic and acidic residues) spans 104-115 (KTTDVESQDAKK). The span at 121-134 (DQVQPSTSASSANF) shows a compositional bias: polar residues. Acidic residues predominate over residues 156-171 (DYEEEEEEEEEEELGG). Over residues 172 to 191 (GEERRDSSKHLPDAQGREHS) the composition is skewed to basic and acidic residues. A compositionally biased stretch (polar residues) spans 196-212 (RETTSNVLPNDPFNTNP). Ser-223 is subject to Phosphoserine. The stretch at 310–338 (IECYRRVEKLRNRQDEIKNKLKEVLTIKE) forms a coiled coil. A phosphoserine mark is found at Ser-349 and Ser-360.

As to quaternary structure, component of the XAB2 complex, a multimeric protein complex composed of XAB2, PRPF19, AQR, ZNF830, ISY1, and PPIE; this complex binds preferentially to RNA. Interacts with XAB2. Identified in a pentameric intron-binding (IB) complex composed of AQR, XAB2, ISY1, ZNF830 and PPIE that is incorporated into the spliceosome as a preassembled complex. The IB complex does not contain PRPF19. Post-translationally, phosphorylated in response to DNA damage by the cell cycle checkpoint kinases ATR/ATM.

The protein localises to the nucleus. It is found in the chromosome. It localises to the nucleus speckle. Its function is as follows. May play a role in pre-mRNA splicing as component of the spliceosome. Acts as an important regulator of the cell cycle that participates in the maintenance of genome integrity. During cell cycle progression in embryonic fibroblast, prevents replication fork collapse, double-strand break formation and cell cycle checkpoint activation. Controls mitotic cell cycle progression and cell survival in rapidly proliferating intestinal epithelium and embryonic stem cells. During the embryo preimplantation, controls different aspects of M phase. During early oocyte growth, plays a role in oocyte survival by preventing chromosomal breaks formation, activation of TP63 and reduction of transcription. The polypeptide is Zinc finger protein 830 (Rattus norvegicus (Rat)).